The sequence spans 317 residues: Thymidylate synthase (317 aa).

DUMP is bound by residues arginine 24 and 179–180 (RR). The Nucleophile role is filled by cysteine 199. DUMP-binding positions include 219-222 (RSAD), asparagine 230, and 260-262 (HIY). Aspartate 222 contributes to the (6R)-5,10-methylene-5,6,7,8-tetrahydrofolate binding site. Alanine 316 contacts (6R)-5,10-methylene-5,6,7,8-tetrahydrofolate.

It belongs to the thymidylate synthase family. Bacterial-type ThyA subfamily. In terms of assembly, homodimer.

Its subcellular location is the cytoplasm. The enzyme catalyses dUMP + (6R)-5,10-methylene-5,6,7,8-tetrahydrofolate = 7,8-dihydrofolate + dTMP. It participates in pyrimidine metabolism; dTTP biosynthesis. Its function is as follows. Catalyzes the reductive methylation of 2'-deoxyuridine-5'-monophosphate (dUMP) to 2'-deoxythymidine-5'-monophosphate (dTMP) while utilizing 5,10-methylenetetrahydrofolate (mTHF) as the methyl donor and reductant in the reaction, yielding dihydrofolate (DHF) as a by-product. This enzymatic reaction provides an intracellular de novo source of dTMP, an essential precursor for DNA biosynthesis. The polypeptide is Thymidylate synthase (Oceanobacillus iheyensis (strain DSM 14371 / CIP 107618 / JCM 11309 / KCTC 3954 / HTE831)).